The following is a 262-amino-acid chain: Tritrans,polycis-undecaprenyl-diphosphate synthase (geranylgeranyl-diphosphate specific) (262 aa).

Asp40 is an active-site residue. Asp40 serves as a coordination point for Mg(2+). Substrate-binding positions include 41–44 (GNRR), Trp45, and 85–87 (STE). The active-site Proton acceptor is Asn88. Residues Arg92, Arg211, and 217–219 (RIS) each bind substrate. Glu230 is a Mg(2+) binding site.

Belongs to the UPP synthase family. Homodimer. The cofactor is Mg(2+).

It catalyses the reaction geranylgeranyl diphosphate + 7 isopentenyl diphosphate = tri-trans,hepta-cis-undecaprenyl diphosphate + 7 diphosphate. Its function is as follows. Catalyzes the sequential condensation of isopentenyl diphosphate (IPP) with geranylgeranyl diphosphate (GGPP) to yield (2Z,6Z,10Z,14Z,18Z,22Z,26Z,30E,34E,38E)-undecaprenyl diphosphate (tritrans,heptacis-UPP). It is probably the precursor of glycosyl carrier lipids. The sequence is that of Tritrans,polycis-undecaprenyl-diphosphate synthase (geranylgeranyl-diphosphate specific) from Sulfurisphaera tokodaii (strain DSM 16993 / JCM 10545 / NBRC 100140 / 7) (Sulfolobus tokodaii).